We begin with the raw amino-acid sequence, 553 residues long: Putative transport protein YidE (553 aa).

5 helical membrane-spanning segments follow: residues 4–24 (IALT…IGNV), 28–48 (GIGL…HFVS), 65–85 (FGLI…FFAS), 95–115 (LFAV…HKLF), and 158–178 (MSYA…MWML). 2 RCK C-terminal domains span residues 191-276 (QQHE…VIGQ) and 279-361 (DTSL…VLGN). Transmembrane regions (helical) follow at residues 371-391 (MLPV…PVFV), 393-413 (GFPA…ALIL), 439-459 (IVLF…NTLV), 464-484 (LSWI…VGIL), 493-513 (YLTM…LAFA), and 533-553 (LVMF…WSIG).

Belongs to the AAE transporter (TC 2.A.81) family. YidE subfamily.

The protein resides in the cell membrane. The protein is Putative transport protein YidE of Shigella boydii serotype 4 (strain Sb227).